Here is a 300-residue protein sequence, read N- to C-terminus: Acetyl-coenzyme A carboxylase carboxyl transferase subunit beta (300 aa).

A CoA carboxyltransferase N-terminal domain is found at Leu-24 to Ala-293. Zn(2+)-binding residues include Cys-28, Cys-31, Cys-47, and Cys-50. The C4-type zinc-finger motif lies at Cys-28–Cys-50.

The protein belongs to the AccD/PCCB family. As to quaternary structure, acetyl-CoA carboxylase is a heterohexamer composed of biotin carboxyl carrier protein (AccB), biotin carboxylase (AccC) and two subunits each of ACCase subunit alpha (AccA) and ACCase subunit beta (AccD). Requires Zn(2+) as cofactor.

It is found in the cytoplasm. It catalyses the reaction N(6)-carboxybiotinyl-L-lysyl-[protein] + acetyl-CoA = N(6)-biotinyl-L-lysyl-[protein] + malonyl-CoA. The protein operates within lipid metabolism; malonyl-CoA biosynthesis; malonyl-CoA from acetyl-CoA: step 1/1. Functionally, component of the acetyl coenzyme A carboxylase (ACC) complex. Biotin carboxylase (BC) catalyzes the carboxylation of biotin on its carrier protein (BCCP) and then the CO(2) group is transferred by the transcarboxylase to acetyl-CoA to form malonyl-CoA. The sequence is that of Acetyl-coenzyme A carboxylase carboxyl transferase subunit beta from Gluconacetobacter diazotrophicus (strain ATCC 49037 / DSM 5601 / CCUG 37298 / CIP 103539 / LMG 7603 / PAl5).